A 432-amino-acid polypeptide reads, in one-letter code: G-protein coupled receptor 22 (432 aa).

Topologically, residues 1-45 are extracellular; it reads MCFSPVLEINMQSESNVTVRDDIDDIDTNMYQPLSYPLSFQVSLT. N-linked (GlcNAc...) asparagine glycosylation occurs at N16. Residues 46-66 traverse the membrane as a helical segment; that stretch reads GFLMLEIVLGLGSNLTVLVLY. Residues 67–85 lie on the Cytoplasmic side of the membrane; sequence CMKSNLINSVSNIITMNLH. A helical membrane pass occupies residues 86 to 106; the sequence is VLDVIICVGCIPLTIVILLLS. The Extracellular portion of the chain corresponds to 107 to 115; that stretch reads LESNTALIC. A helical transmembrane segment spans residues 116-136; the sequence is CFHEACVSFASVSTAINVFAI. At 137–156 the chain is on the cytoplasmic side; it reads TLDRYDISVKPANRILTMGR. A helical membrane pass occupies residues 157 to 177; it reads AVMLMTSIWIFSFFSFLIPFI. Topologically, residues 178-208 are extracellular; it reads EVNFFSLQSGNTWANKTLLCVSTSEYYTELG. N192 carries N-linked (GlcNAc...) asparagine glycosylation. Residues 209-229 form a helical membrane-spanning segment; it reads MYYHLLVQIPIFFFTVIVMLI. Over 230–314 the chain is Cytoplasmic; sequence TYTKILQALN…ERQKRVFKMS (85 aa). The chain crosses the membrane as a helical span at residues 315–335; it reads LLIISTFLLCWTPISVLNTTI. Residues 336 to 348 lie on the Extracellular side of the membrane; the sequence is LCLGPSDLLVKLR. A helical transmembrane segment spans residues 349 to 369; the sequence is LCFLVMAYGTTIFHPLLYAFT. At 370–432 the chain is on the cytoplasmic side; it reads RQKFQKVLKS…KCLVPQVVTD (63 aa).

Belongs to the G-protein coupled receptor 1 family. In terms of tissue distribution, abundant levels detected in the brain and heart and no detectable expression in other peripheral tissues.

It localises to the cell membrane. Orphan G-protein coupled receptor. Seems to act through a G(i)/G(o) mediated pathway. May be involved in ciliogenesis. The sequence is that of G-protein coupled receptor 22 (Gpr22) from Mus musculus (Mouse).